The following is a 55-amino-acid chain: Large ribosomal subunit protein bL33 (55 aa).

This sequence belongs to the bacterial ribosomal protein bL33 family.

This is Large ribosomal subunit protein bL33 from Rhizobium johnstonii (strain DSM 114642 / LMG 32736 / 3841) (Rhizobium leguminosarum bv. viciae).